A 185-amino-acid polypeptide reads, in one-letter code: Monooxygenase hypC (185 aa).

A run of 3 helical transmembrane segments spans residues 35–55 (TGTF…PVIL), 75–95 (GHIQ…YAAY), and 106–126 (PFAV…VFMA). N-linked (GlcNAc...) asparagine glycosylation is present at Asn129. Residues 165 to 185 (ALFPLSGAVLGLLSTCKIVSF) traverse the membrane as a helical segment.

The protein belongs to the anthrone oxygenase family.

The protein resides in the membrane. The protein operates within mycotoxin biosynthesis. In terms of biological role, monooxygenase; part of the fragmented gene cluster that mediates the biosynthesis of dothistromin (DOTH), a polyketide toxin very similar in structure to the aflatoxin precursor, versicolorin B. The first step of the pathway is the conversion of acetate to norsolorinic acid (NOR) and requires the fatty acid synthase subunits hexA and hexB, as well as the polyketide synthase pksA. PksA combines a hexanoyl starter unit and 7 malonyl-CoA extender units to synthesize the precursor NOR. The hexanoyl starter unit is provided to the acyl-carrier protein (ACP) domain by the fungal fatty acid synthase hexA/hexB. The second step is the conversion of NOR to averantin (AVN) and requires the norsolorinic acid ketoreductase nor1, which catalyzes the dehydration of norsolorinic acid to form (1'S)-averantin. The cytochrome P450 monooxygenase avnA then catalyzes the hydroxylation of AVN to 5'hydroxyaverantin (HAVN). The next step is performed by adhA that transforms HAVN to averufin (AVF). Averufin might then be converted to hydroxyversicolorone by cypX and avfA. Hydroxyversicolorone is further converted versiconal hemiacetal acetate (VHA) by moxY. VHA is then the substrate for the versiconal hemiacetal acetate esterase est1 to yield versiconal (VAL). Versicolorin B synthase vbsA then converts VAL to versicolorin B (VERB) by closing the bisfuran ring. Then, the activity of the versicolorin B desaturase verB leads to versicolorin A (VERA). DotB, a predicted chloroperoxidase, may perform epoxidation of the A-ring of VERA. Alternatively, a cytochrome P450, such as cypX or avnA could catalyze this step. It is also possible that another, uncharacterized, cytochrome P450 enzyme is responsible for this step. Opening of the epoxide could potentially be achieved by the epoxide hydrolase epoA. However, epoA seems not to be required for DOTH biosynthesis, but other epoxide hydrolases may have the ability to complement this hydrolysis. Alternatively, opening of the epoxide ring could be achieved non-enzymatically. The next step is the deoxygenation of ring A to yield the 5,8-dihydroxyanthraquinone which is most likely catalyzed by the NADPH dehydrogenase encoded by ver1. The last stages of DOTH biosynthesis are proposed to involve hydroxylation of the bisfuran. OrdB and norB might have oxidative roles here. An alternative possibility is that cytochrome P450 monoogenases such as avnA and cypX might perform these steps in addition to previously proposed steps. The chain is Monooxygenase hypC from Dothistroma septosporum (strain NZE10 / CBS 128990) (Red band needle blight fungus).